We begin with the raw amino-acid sequence, 116 residues long: Large ribosomal subunit protein bL20c (116 aa).

It belongs to the bacterial ribosomal protein bL20 family.

It is found in the plastid. The protein localises to the chloroplast. Binds directly to 23S ribosomal RNA and is necessary for the in vitro assembly process of the 50S ribosomal subunit. It is not involved in the protein synthesizing functions of that subunit. The polypeptide is Large ribosomal subunit protein bL20c (Ipomoea purpurea (Common morning glory)).